The following is a 318-amino-acid chain: Methionyl-tRNA formyltransferase (318 aa).

Serine 117–proline 120 serves as a coordination point for (6S)-5,6,7,8-tetrahydrofolate.

It belongs to the Fmt family.

It carries out the reaction L-methionyl-tRNA(fMet) + (6R)-10-formyltetrahydrofolate = N-formyl-L-methionyl-tRNA(fMet) + (6S)-5,6,7,8-tetrahydrofolate + H(+). Its function is as follows. Attaches a formyl group to the free amino group of methionyl-tRNA(fMet). The formyl group appears to play a dual role in the initiator identity of N-formylmethionyl-tRNA by promoting its recognition by IF2 and preventing the misappropriation of this tRNA by the elongation apparatus. This chain is Methionyl-tRNA formyltransferase, found in Malacoplasma penetrans (strain HF-2) (Mycoplasma penetrans).